The primary structure comprises 397 residues: Major outer membrane porin, serovar H (397 aa).

The first 22 residues, 1–22 (MKKLLKSVLVFAALSSASSLQA), serve as a signal peptide directing secretion.

It belongs to the chlamydial porin (CP) (TC 1.B.2) family. As to quaternary structure, part of a disulfide cross-linked outer membrane complex (COMC) composed of the major outer membrane porin (MOMP), the small cysteine-rich protein (OmcA) and the large cysteine-rich periplasmic protein (OmcB).

Its subcellular location is the cell outer membrane. In terms of biological role, in elementary bodies (EBs, the infectious stage, which is able to survive outside the host cell) provides the structural integrity of the outer envelope through disulfide cross-links with the small cysteine-rich protein and the large cysteine-rich periplasmic protein. It has been described in publications as the Sarkosyl-insoluble COMC (Chlamydia outer membrane complex), and serves as the functional equivalent of peptidoglycan. Permits diffusion of specific solutes through the outer membrane. In Chlamydia trachomatis, this protein is Major outer membrane porin, serovar H (ompA).